Here is a 68-residue protein sequence, read N- to C-terminus: U-reduvitoxin-Pr3a (68 aa).

The first 22 residues, 1–22 (MKAGMKLVLVLVIASIALLALA), serve as a signal peptide directing secretion. Cystine bridges form between Cys29/Cys47, Cys36/Cys52, and Cys46/Cys59.

Belongs to the venom Ptu1-like knottin family. In terms of tissue distribution, expressed by the venom gland.

Its subcellular location is the secreted. Its function is as follows. Binds reversibly and blocks P/Q-type voltage-gated calcium channels (Cav). This chain is U-reduvitoxin-Pr3a, found in Platymeris rhadamanthus (Red spot assassin bug).